We begin with the raw amino-acid sequence, 37 residues long: Large ribosomal subunit protein bL36 (37 aa).

This sequence belongs to the bacterial ribosomal protein bL36 family.

This is Large ribosomal subunit protein bL36 from Nitrosococcus oceani (strain ATCC 19707 / BCRC 17464 / JCM 30415 / NCIMB 11848 / C-107).